The chain runs to 595 residues: Miltiradiene synthase KSL1, chloroplastic (595 aa).

A chloroplast-targeting transit peptide spans 1-47 (MSLAFNPAATAFSGNGARSRRENFPVKHVTVRGFPMITNKSSFAVKC). Aspartate 334, aspartate 338, asparagine 478, and glutamate 486 together coordinate Mg(2+). Positions 334 to 338 (DDFFD) match the DDXXD motif motif.

Belongs to the terpene synthase family. Mg(2+) is required as a cofactor.

Its subcellular location is the plastid. It is found in the chloroplast. The enzyme catalyses (+)-copalyl diphosphate = miltiradiene + diphosphate. It participates in secondary metabolite biosynthesis; terpenoid biosynthesis. In terms of biological role, involved in tanshinone biosynthesis in hairy roots. Catalyzes the conversion of copalyl diphosphate (CPP) to miltiradiene. The protein is Miltiradiene synthase KSL1, chloroplastic of Salvia miltiorrhiza (Chinese sage).